Reading from the N-terminus, the 239-residue chain is Ubiquinone biosynthesis O-methyltransferase (239 aa).

S-adenosyl-L-methionine is bound by residues arginine 44, glycine 63, aspartate 84, and methionine 128.

It belongs to the methyltransferase superfamily. UbiG/COQ3 family.

The catalysed reaction is a 3-demethylubiquinol + S-adenosyl-L-methionine = a ubiquinol + S-adenosyl-L-homocysteine + H(+). It carries out the reaction a 3-(all-trans-polyprenyl)benzene-1,2-diol + S-adenosyl-L-methionine = a 2-methoxy-6-(all-trans-polyprenyl)phenol + S-adenosyl-L-homocysteine + H(+). Its pathway is cofactor biosynthesis; ubiquinone biosynthesis. In terms of biological role, O-methyltransferase that catalyzes the 2 O-methylation steps in the ubiquinone biosynthetic pathway. The sequence is that of Ubiquinone biosynthesis O-methyltransferase from Xanthomonas oryzae pv. oryzae (strain MAFF 311018).